The chain runs to 251 residues: HTH-type transcriptional regulator UlaR (251 aa).

The HTH deoR-type domain occupies 3–58 (EAQRHQILLEMLAQLGFVTVEKVVERLGISPATARRDINKLDERGKLKKVRNGAEA). The segment at residues 20-39 (VTVEKVVERLGISPATARRD) is a DNA-binding region (H-T-H motif).

The protein resides in the cytoplasm. Its function is as follows. Represses ulaG and the ulaABCDEF operon. The protein is HTH-type transcriptional regulator UlaR of Shigella sonnei (strain Ss046).